Here is a 65-residue protein sequence, read N- to C-terminus: Small ribosomal subunit protein eS17 (65 aa).

Belongs to the eukaryotic ribosomal protein eS17 family.

This chain is Small ribosomal subunit protein eS17, found in Methanobrevibacter smithii (strain ATCC 35061 / DSM 861 / OCM 144 / PS).